Reading from the N-terminus, the 98-residue chain is NADH-ubiquinone oxidoreductase chain 4L (98 aa).

3 consecutive transmembrane segments (helical) span residues Pro2–Phe22, Ser29–Leu49, and Ile61–Val81.

This sequence belongs to the complex I subunit 4L family. In terms of assembly, core subunit of respiratory chain NADH dehydrogenase (Complex I) which is composed of 45 different subunits.

The protein localises to the mitochondrion inner membrane. The enzyme catalyses a ubiquinone + NADH + 5 H(+)(in) = a ubiquinol + NAD(+) + 4 H(+)(out). Core subunit of the mitochondrial membrane respiratory chain NADH dehydrogenase (Complex I) which catalyzes electron transfer from NADH through the respiratory chain, using ubiquinone as an electron acceptor. Part of the enzyme membrane arm which is embedded in the lipid bilayer and involved in proton translocation. The chain is NADH-ubiquinone oxidoreductase chain 4L (MT-ND4L) from Eulemur mongoz (Mongoose lemur).